Reading from the N-terminus, the 961-residue chain is E3 ubiquitin-protein ligase TRIM37 (961 aa).

M1 is subject to N-acetylmethionine. The RING-type; degenerate zinc-finger motif lies at 15-55 (CFICMEKLRDARLCPHCSKLCCFSCIRRWLTEQRAQCPHCR). A B box-type zinc finger spans residues 90–132 (NEKDKCENHHEKLSVFCWTCKKCICHQCALWGGMHGGHTFKPL). Zn(2+)-binding residues include C95, H98, C117, and H124. Residues 132–234 (LAEIYEQHVT…VEHQLRSCSK (103 aa)) adopt a coiled-coil conformation. The MATH domain occupies 276–403 (YDSATFVLEN…NDTVILRFQV (128 aa)). A coiled-coil region spans residues 419-450 (ITQLEAAQTGYIQQINNLKERLTIELSRTQKS). Disordered stretches follow at residues 447–514 (TQKS…HHEL), 529–561 (VNHL…SGEN), 645–665 (SLLQ…KQQA), 776–811 (AVDS…SPRA), and 874–961 (LESH…GGGR). Residue S454 is modified to Phosphoserine. Positions 504–514 (KIQNEDYHHEL) are enriched in basic and acidic residues. Positions 535 to 545 (SSSSASSTATS) are enriched in low complexity. Acidic residues predominate over residues 548 to 561 (EENDIDEETMSGEN). The segment covering 776-787 (AVDSGENSRSKG) has biased composition (basic and acidic residues). The segment covering 795-806 (GSSGSSQSGSRH) has biased composition (low complexity). Residues 903–915 (SDIECDTENEEQE) show a composition bias toward acidic residues.

It belongs to the TRIM/RBCC family. In terms of assembly, associates with the PRC2/EED-EZH2 complex. Auto-ubiquitinated. In terms of tissue distribution, highly expressed in testis and brain. In embryonic tissues, expressed in epithelia, including ducts of the developing pancreas, epithelium of the midgut and nasal epithelium. In adult, detected in the central and peripheral nervous systems, including enteric ganglia, retina and the adrenal medulla (at protein level).

It localises to the chromosome. It is found in the cytoplasm. Its subcellular location is the perinuclear region. The protein resides in the peroxisome membrane. The enzyme catalyses S-ubiquitinyl-[E2 ubiquitin-conjugating enzyme]-L-cysteine + [acceptor protein]-L-lysine = [E2 ubiquitin-conjugating enzyme]-L-cysteine + N(6)-ubiquitinyl-[acceptor protein]-L-lysine.. It participates in protein modification; protein ubiquitination. Its function is as follows. E3 ubiquitin-protein ligase required to prevent centriole reduplication. Probably acts by ubiquitinating positive regulators of centriole reduplication. Mediates monoubiquitination of 'Lys-119' of histone H2A (H2AK119Ub), a specific tag for epigenetic transcriptional repression: associates with some Polycomb group (PcG) multiprotein PRC2-like complex and mediates repression of target genes. Also acts as a positive regulator of peroxisome import by mediating monoubiquitination of PEX5 at 'Lys-472': monoubiquitination promotes PEX5 stabilitation by preventing its polyubiquitination and degradation by the proteasome. The polypeptide is E3 ubiquitin-protein ligase TRIM37 (Mus musculus (Mouse)).